An 87-amino-acid chain; its full sequence is UPF0367 protein P9303_26451 (87 aa).

Belongs to the UPF0367 family.

In Prochlorococcus marinus (strain MIT 9303), this protein is UPF0367 protein P9303_26451.